Consider the following 360-residue polypeptide: UPF0324 membrane protein DVU_0123 (360 aa).

The next 10 membrane-spanning stretches (helical) occupy residues 20–42, 57–79, 100–122, 142–164, 171–193, 203–225, 232–254, 278–297, 310–327, and 337–359; these read VTES…FVAP, KDFI…PAVF, SYSL…VFLF, AACL…APAV, MAYS…PLIG, FGAF…FGFS, AGIY…AIMA, FPLF…AGVL, EWAF…TRLS, and FLFG…LLFM.

This sequence belongs to the UPF0324 family.

It localises to the cell membrane. The chain is UPF0324 membrane protein DVU_0123 from Nitratidesulfovibrio vulgaris (strain ATCC 29579 / DSM 644 / CCUG 34227 / NCIMB 8303 / VKM B-1760 / Hildenborough) (Desulfovibrio vulgaris).